The following is an 84-amino-acid chain: Conotoxin Am6.1 (84 aa).

The N-terminal stretch at 1-19 (MEKLTILLLVAAVLMSTHA) is a signal peptide. The propeptide occupies 20–47 (MFQGGGEKSRKAINFSETRKLARNKQKR). Disulfide bonds link Cys48–Cys62, Cys55–Cys66, and Cys61–Cys71. 6'-bromotryptophan; in Am6.1b is present on Trp51. Residues Glu60 and Glu64 each carry the 4-carboxyglutamate; partial; in Am6.1b and Am6.1c modification. Residues 78–84 (RTTSHPI) constitute a propeptide that is removed on maturation.

It belongs to the conotoxin O2 family. Post-translationally, three forms of this peptides have been described. The unmodified Am6.1a (Am3286) is not detected in the venom; Am6.1b (Am3408) is only Trp brominated, while Am6.1c (Am3452) is both Trp brominated and Glu gamma-carboxyglutamated. Both Am6.1b and Am6.1c are detected in the venom. As to expression, expressed by the venom duct.

Its subcellular location is the secreted. Functionally, gamma-conotoxins may act on voltage-gated non-specific cation pacemaker channels (HCN). This Conus amadis (Amadis cone) protein is Conotoxin Am6.1.